Reading from the N-terminus, the 143-residue chain is Large ribosomal subunit protein uL11 (143 aa).

It belongs to the universal ribosomal protein uL11 family. As to quaternary structure, part of the ribosomal stalk of the 50S ribosomal subunit. Interacts with L10 and the large rRNA to form the base of the stalk. L10 forms an elongated spine to which L12 dimers bind in a sequential fashion forming a multimeric L10(L12)X complex. One or more lysine residues are methylated.

Forms part of the ribosomal stalk which helps the ribosome interact with GTP-bound translation factors. This is Large ribosomal subunit protein uL11 from Acidovorax ebreus (strain TPSY) (Diaphorobacter sp. (strain TPSY)).